We begin with the raw amino-acid sequence, 1058 residues long: Bromodomain-containing protein 1 (1058 aa).

Over residues 1–12 the composition is skewed to basic residues; that stretch reads MRRKGRCHRGSA. The interval 1 to 25 is disordered; that stretch reads MRRKGRCHRGSAARHPSSPCSIKHS. An interaction with KAT7/HBO1 and histones region spans residues 31–80; the sequence is LTYAQAQRMVEIEIEGRLHRISIFDPLEIILEDDLTAQEMSECNSNKENS. The residue at position 128 (Ser-128) is a Phosphoserine. The PHD-type 1 zinc-finger motif lies at 214 to 264; that stretch reads DAVCCICMDGECQNSNVILFCDMCNLAVHQECYGVPYIPEGQWLCRHCLQS. The C2HC pre-PHD-type zinc finger occupies 268–301; sequence PADCVLCPNKGGAFKKTDDDRWGHVVCALWIPEV. Residues 325–389 form a PHD-type 2 zinc finger; the sequence is LTCYLCKQKG…RKTAYCDVHT (65 aa). N6-acetyllysine occurs at positions 368, 516, and 519. Glycyl lysine isopeptide (Lys-Gly) (interchain with G-Cter in SUMO2) cross-links involve residues Lys-554 and Lys-594. In terms of domain architecture, Bromo spans 562–666; that stretch reads LRLTPLTVLL…DQGGVVLRQA (105 aa). Positions 754-763 are enriched in polar residues; it reads KLSQQHSQAP. Disordered regions lie at residues 754–776 and 791–847; these read KLSQ…EDEA and LETL…AAPR. Ser-803 is subject to Phosphoserine. The residue at position 903 (Lys-903) is an N6-acetyllysine. Positions 929–1012 constitute a PWWP domain; sequence PLKVVWAKCS…KSKMVPLGVD (84 aa). Phosphoserine is present on residues Ser-1052 and Ser-1055.

In terms of assembly, component of some HBO1 complexes composed of KAT7/HBO1, MEAF6, ING4 and BRD1/BRPF2. Component of the MOZ/MORF complex composed at least of ING5, KAT6A, KAT6B, MEAF6 and one of BRPF1, BRD1/BRPF2 and BRPF3. Interacts (via PHD-type zinc finger domain) with unmodified histone H3. Interacts (via PWWP domain) with dimethylated and trimethylated 'Lys-79' on histone H3.

The protein localises to the nucleus. The protein resides in the chromosome. Its function is as follows. Scaffold subunit of various histone acetyltransferase (HAT) complexes, such as the MOZ/MORF and HBO1 complexes, that acts as a regulator of hematopoiesis. Plays a key role in HBO1 complex by directing KAT7/HBO1 specificity towards histone H3 'Lys-14' acetylation (H3K14ac), thereby promoting erythroid differentiation. This Mus musculus (Mouse) protein is Bromodomain-containing protein 1.